A 1077-amino-acid polypeptide reads, in one-letter code: Zinc finger protein 518B (1077 aa).

Positions 9 to 30 (YTTQVNGGPSSLTMSPKQPNRA) are enriched in polar residues. A disordered region spans residues 9–35 (YTTQVNGGPSSLTMSPKQPNRATRTER). 2 consecutive C2H2-type zinc fingers follow at residues 160–182 (FICSHCSYISYTKGEFQRHLVKH) and 188–211 (YRCEYCDYGAIRNDYIVKHRRRVH). Residues 372–397 (TSRGDGGTSECLSTEKGSGGQKKMLS) are disordered. Lysine 479 participates in a covalent cross-link: Glycyl lysine isopeptide (Lys-Gly) (interchain with G-Cter in SUMO2). Disordered stretches follow at residues 561–585 (LVSSDRKLEDKQMESKAVGNTGQVS), 599–622 (GEDKPRSQQPGDQPGQPKTSETAG), 675–739 (KPSS…GSRQ), and 825–852 (QPLTCRSGPADMSPGLETSLRPKSRKED). Positions 564–574 (SDRKLEDKQME) are enriched in basic and acidic residues. Polar residues-rich tracts occupy residues 605–621 (SQQPGDQPGQPKTSETA) and 675–688 (KPSSLSANSAQRRS). Glycyl lysine isopeptide (Lys-Gly) (interchain with G-Cter in SUMO2) cross-links involve residues lysine 847 and lysine 861. The tract at residues 895–914 (QVNSTKKKNKMQANPGRYFK) is disordered. Residues 1039-1061 (FKCWFCGRLYEDQEEWMSHGQRH) form a C2H2-type 3 zinc finger.

Belongs to the krueppel C2H2-type zinc-finger protein family.

It is found in the nucleus. Functionally, through its association with the EHMT1-EHMT2/G9A and PRC2/EED-EZH2 histone methyltransferase complexes may function in gene silencing, regulating repressive post-translational methylation of histone tails at promoters of target genes. In Mus musculus (Mouse), this protein is Zinc finger protein 518B (Znf518b).